We begin with the raw amino-acid sequence, 52 residues long: Rubredoxin (52 aa).

Met1 carries the N-formylmethionine; partial modification. The 52-residue stretch at Met1–Leu52 folds into the Rubredoxin-like domain. Fe cation-binding residues include Cys6, Cys9, Cys39, and Cys42.

This sequence belongs to the rubredoxin family. The cofactor is Fe(3+). Post-translationally, observed in four forms, with and without iron, and with and without formylation at Met-1.

Its function is as follows. Rubredoxin is a small nonheme, iron protein lacking acid-labile sulfide. Its single Fe, chelated to 4 Cys, functions as an electron acceptor and may also stabilize the conformation of the molecule. This Heliobacterium mobile (Heliobacillus mobilis) protein is Rubredoxin.